A 457-amino-acid polypeptide reads, in one-letter code: Multidrug resistance protein MdtK (457 aa).

12 helical membrane-spanning segments follow: residues 11–31, 46–66, 93–113, 127–147, 160–180, 188–208, 243–263, 283–301, 316–336, 357–377, 387–407, and 418–438; these read LLAL…MGVV, AVAV…GLLL, WLAL…DHVI, AVGF…FQVL, GMVI…IFIY, LGGV…FLMM, LPVA…ALLV, LMFM…RVGF, YTSM…TIVF, LMLL…GSGV, IFFI…YLLG, and PAGF…LMVL.

Belongs to the multi antimicrobial extrusion (MATE) (TC 2.A.66.1) family. MdtK subfamily.

The protein localises to the cell inner membrane. Multidrug efflux pump that functions probably as a Na(+)/drug antiporter. This chain is Multidrug resistance protein MdtK, found in Yersinia pseudotuberculosis serotype IB (strain PB1/+).